Consider the following 425-residue polypeptide: Stabilizer of axonemal microtubules 4 (425 aa).

Disordered stretches follow at residues Arg259–Pro297 and Asn315–Gln335. Basic and acidic residues predominate over residues Gly260 to Glu272. A compositionally biased stretch (low complexity) spans Pro277–Ser290. Positions Phe321–Ser332 are enriched in polar residues.

As to quaternary structure, microtubule inner protein component of sperm flagellar doublet microtubules. Interacts with PPP1CA. Expressed in brain, ovaries and testis. Expressed in the tracheal epithelium and in secondary spermatocytes and spermatids present in the seminiferous tubule. Expressed in ependymal cells lining the ventricular walls of the brain.

It is found in the cell projection. The protein resides in the cilium. Its subcellular location is the cytoplasm. The protein localises to the cytoskeleton. It localises to the flagellum axoneme. The polypeptide is Stabilizer of axonemal microtubules 4 (Rattus norvegicus (Rat)).